The chain runs to 399 residues: Subtilisin-like protease 4 (399 aa).

Positions 1 to 19 are cleaved as a signal peptide; sequence MVCLKTLSVFLAAFAAADA. Positions 20 to 118 are excised as a propeptide; sequence RAVFKTQGHK…VEQDQVVRIS (99 aa). The Inhibitor I9 domain occupies 38 to 117; that stretch reads YIVVMKDGVS…YVEQDQVVRI (80 aa). The 272-residue stretch at 128-399 folds into the Peptidase S8 domain; the sequence is SWGLGRVSHR…NRLLYNGSGQ (272 aa). Catalysis depends on charge relay system residues D160 and H191. 2 N-linked (GlcNAc...) asparagine glycosylation sites follow: N252 and N308. S346 serves as the catalytic Charge relay system. N-linked (GlcNAc...) asparagine glycosylation occurs at N395.

Belongs to the peptidase S8 family.

Its subcellular location is the secreted. Its function is as follows. Secreted subtilisin-like serine protease with keratinolytic activity that contributes to pathogenicity. The sequence is that of Subtilisin-like protease 4 (SUB4) from Arthroderma benhamiae (strain ATCC MYA-4681 / CBS 112371) (Trichophyton mentagrophytes).